Reading from the N-terminus, the 269-residue chain is Tryptophan synthase alpha chain (269 aa).

Catalysis depends on proton acceptor residues glutamate 49 and aspartate 60.

Belongs to the TrpA family. As to quaternary structure, tetramer of two alpha and two beta chains.

The catalysed reaction is (1S,2R)-1-C-(indol-3-yl)glycerol 3-phosphate + L-serine = D-glyceraldehyde 3-phosphate + L-tryptophan + H2O. It functions in the pathway amino-acid biosynthesis; L-tryptophan biosynthesis; L-tryptophan from chorismate: step 5/5. The alpha subunit is responsible for the aldol cleavage of indoleglycerol phosphate to indole and glyceraldehyde 3-phosphate. The chain is Tryptophan synthase alpha chain from Paramagnetospirillum magneticum (strain ATCC 700264 / AMB-1) (Magnetospirillum magneticum).